The chain runs to 682 residues: Protein PilJ (682 aa).

Over 1 to 14 (MKKINAGNLFAGMR) the chain is Cytoplasmic. Residues 15 to 38 (SSSVIAGLFIVLIVSIVLLFANFA) form a helical membrane-spanning segment. Residues 39 to 306 (YLNTQSNHDK…DGFENLAGGR (268 aa)) lie on the Periplasmic side of the membrane. Residues 307–333 (SINLFAGYALGALALASIILIGLVMVR) form a helical membrane-spanning segment. Residues 334-682 (ETNRRLAETA…FKLPEGVEQA (349 aa)) are Cytoplasmic-facing. An HAMP domain is found at 347–398 (DRNQAAILRLLDEIADLADGDLTVAATVTEDFTGAIADSINYSIDQLRELVE). Residues 403 to 639 (TAVQVAAAAQ…HISNTMNVIQ (237 aa)) form the Methyl-accepting transducer domain.

It belongs to the methyl-accepting chemotaxis (MCP) protein family.

The protein localises to the cell inner membrane. Functionally, may be a part of a signal-transduction system that regulates twitching motility by controlling pilus function (extension and retraction). This is Protein PilJ (pilJ) from Pseudomonas aeruginosa (strain ATCC 15692 / DSM 22644 / CIP 104116 / JCM 14847 / LMG 12228 / 1C / PRS 101 / PAO1).